A 623-amino-acid chain; its full sequence is Transketolase (623 aa).

Residue Met-1 is modified to N-acetylmethionine. Residues Lys-6 and Lys-11 each carry the N6-acetyllysine modification. His-37 contributes to the substrate binding site. Residues Ser-40 and His-77 each contribute to the thiamine diphosphate site. Ser-104 bears the Phosphoserine mark. 123–125 (GSL) contributes to the thiamine diphosphate binding site. The residue at position 144 (Lys-144) is an N6-acetyllysine. Residue Asp-155 coordinates Mg(2+). Positions 156 and 185 each coordinate thiamine diphosphate. Positions 185 and 187 each coordinate Mg(2+). N6-acetyllysine is present on residues Lys-204, Lys-232, and Lys-241. Thiamine diphosphate-binding residues include Lys-244 and His-258. Residue His-258 coordinates substrate. Lys-260 is subject to N6-acetyllysine. Phosphotyrosine is present on Tyr-275. Thr-287 carries the post-translational modification Phosphothreonine. Position 295 is a phosphoserine (Ser-295). Arg-318 and Ser-345 together coordinate substrate. Ser-345 is subject to Phosphoserine. Residue Lys-352 forms a Glycyl lysine isopeptide (Lys-Gly) (interchain with G-Cter in SUMO2) linkage. Glu-366 (proton donor) is an active-site residue. Residue Phe-392 coordinates thiamine diphosphate. His-416 and Asp-424 together coordinate substrate. Gln-428 provides a ligand contact to thiamine diphosphate. Arg-474 lines the substrate pocket. An N6-acetyllysine mark is found at Lys-538 and Lys-603.

It belongs to the transketolase family. In terms of assembly, homodimer. Mg(2+) serves as cofactor. Ca(2+) is required as a cofactor. The cofactor is Mn(2+). Requires Co(2+) as cofactor. It depends on thiamine diphosphate as a cofactor.

It carries out the reaction D-sedoheptulose 7-phosphate + D-glyceraldehyde 3-phosphate = aldehydo-D-ribose 5-phosphate + D-xylulose 5-phosphate. Functionally, catalyzes the transfer of a two-carbon ketol group from a ketose donor to an aldose acceptor, via a covalent intermediate with the cofactor thiamine pyrophosphate. The polypeptide is Transketolase (Tkt) (Rattus norvegicus (Rat)).